We begin with the raw amino-acid sequence, 478 residues long: RNA pseudouridine synthase 3, mitochondrial (478 aa).

The transit peptide at 1 to 20 (MWKAKTCFRQIYLTVLIRRY) directs the protein to the mitochondrion. Residues 92-162 (EEIYDKAIQT…MRISKRYDTI (71 aa)) form the S4 RNA-binding domain. Residue Asp-232 is part of the active site.

This sequence belongs to the pseudouridine synthase RluA family.

It localises to the mitochondrion. The catalysed reaction is a uridine in RNA = a pseudouridine in RNA. The sequence is that of RNA pseudouridine synthase 3, mitochondrial from Arabidopsis thaliana (Mouse-ear cress).